The chain runs to 553 residues: Dihydroxy-acid dehydratase (553 aa).

Residue Asp78 participates in Mg(2+) binding. Cys119 lines the [2Fe-2S] cluster pocket. Residues Asp120 and Lys121 each contribute to the Mg(2+) site. At Lys121 the chain carries N6-carboxylysine. Cys193 is a binding site for [2Fe-2S] cluster. Position 441 (Glu441) interacts with Mg(2+). The active-site Proton acceptor is Ser467.

Belongs to the IlvD/Edd family. Homodimer. [2Fe-2S] cluster serves as cofactor. Mg(2+) is required as a cofactor.

It catalyses the reaction (2R)-2,3-dihydroxy-3-methylbutanoate = 3-methyl-2-oxobutanoate + H2O. The catalysed reaction is (2R,3R)-2,3-dihydroxy-3-methylpentanoate = (S)-3-methyl-2-oxopentanoate + H2O. It participates in amino-acid biosynthesis; L-isoleucine biosynthesis; L-isoleucine from 2-oxobutanoate: step 3/4. It functions in the pathway amino-acid biosynthesis; L-valine biosynthesis; L-valine from pyruvate: step 3/4. In terms of biological role, functions in the biosynthesis of branched-chain amino acids. Catalyzes the dehydration of (2R,3R)-2,3-dihydroxy-3-methylpentanoate (2,3-dihydroxy-3-methylvalerate) into 2-oxo-3-methylpentanoate (2-oxo-3-methylvalerate) and of (2R)-2,3-dihydroxy-3-methylbutanoate (2,3-dihydroxyisovalerate) into 2-oxo-3-methylbutanoate (2-oxoisovalerate), the penultimate precursor to L-isoleucine and L-valine, respectively. This chain is Dihydroxy-acid dehydratase, found in Geotalea daltonii (strain DSM 22248 / JCM 15807 / FRC-32) (Geobacter daltonii).